Consider the following 366-residue polypeptide: Alanine racemase (366 aa).

K40 functions as the Proton acceptor; specific for D-alanine in the catalytic mechanism. N6-(pyridoxal phosphate)lysine is present on K40. R136 serves as a coordination point for substrate. Y263 functions as the Proton acceptor; specific for L-alanine in the catalytic mechanism. Residue M310 participates in substrate binding.

The protein belongs to the alanine racemase family. Pyridoxal 5'-phosphate serves as cofactor.

The enzyme catalyses L-alanine = D-alanine. Its pathway is amino-acid biosynthesis; D-alanine biosynthesis; D-alanine from L-alanine: step 1/1. In terms of biological role, catalyzes the interconversion of L-alanine and D-alanine. May also act on other amino acids. This chain is Alanine racemase (alr), found in Streptococcus equi subsp. zooepidemicus (strain H70).